A 608-amino-acid chain; its full sequence is Glutamyl-tRNA(Gln) amidotransferase subunit E (608 aa).

A disordered region spans residues 401–428 (PEETRAANPDGTTRFLRPRPGAARMYPE).

The protein belongs to the GatB/GatE family. GatE subfamily. In terms of assembly, heterodimer of GatD and GatE.

The enzyme catalyses L-glutamyl-tRNA(Gln) + L-glutamine + ATP + H2O = L-glutaminyl-tRNA(Gln) + L-glutamate + ADP + phosphate + H(+). Its function is as follows. Allows the formation of correctly charged Gln-tRNA(Gln) through the transamidation of misacylated Glu-tRNA(Gln) in organisms which lack glutaminyl-tRNA synthetase. The reaction takes place in the presence of glutamine and ATP through an activated gamma-phospho-Glu-tRNA(Gln). The GatDE system is specific for glutamate and does not act on aspartate. The chain is Glutamyl-tRNA(Gln) amidotransferase subunit E from Pyrobaculum arsenaticum (strain DSM 13514 / JCM 11321 / PZ6).